The chain runs to 428 residues: Elongation factor 1-alpha (428 aa).

Positions 5–215 (KPHVNIVFIG…ALDQIPEPPK (211 aa)) constitute a tr-type G domain. The tract at residues 14–21 (GHVDHGKS) is G1. GTP is bound at residue 14-21 (GHVDHGKS). Serine 21 provides a ligand contact to Mg(2+). Positions 68–72 (GITID) are G2. The segment at 89–92 (DAPG) is G3. GTP contacts are provided by residues 89 to 93 (DAPGH) and 144 to 147 (NKMD). The G4 stretch occupies residues 144–147 (NKMD). A G5 region spans residues 181 to 183 (SAW).

This sequence belongs to the TRAFAC class translation factor GTPase superfamily. Classic translation factor GTPase family. EF-Tu/EF-1A subfamily.

It is found in the cytoplasm. The enzyme catalyses GTP + H2O = GDP + phosphate + H(+). GTP hydrolase that promotes the GTP-dependent binding of aminoacyl-tRNA to the A-site of ribosomes during protein biosynthesis. The chain is Elongation factor 1-alpha from Thermococcus kodakarensis (strain ATCC BAA-918 / JCM 12380 / KOD1) (Pyrococcus kodakaraensis (strain KOD1)).